Reading from the N-terminus, the 426-residue chain is tRNA modification GTPase MnmE (426 aa).

3 residues coordinate (6S)-5-formyl-5,6,7,8-tetrahydrofolate: Arg-20, Glu-77, and Met-117. Positions 213–350 constitute a TrmE-type G domain; it reads GFEVAILGAP…LLTDIEGVLS (138 aa). K(+) is bound at residue Asn-223. GTP is bound by residues 223–228, 242–248, and 267–270; these read NAGKST, SDVPGTT, and DTAG. Ser-227 serves as a coordination point for Mg(2+). K(+) contacts are provided by Ser-242, Val-244, and Thr-247. Mg(2+) is bound at residue Thr-248. Residue Lys-426 coordinates (6S)-5-formyl-5,6,7,8-tetrahydrofolate.

The protein belongs to the TRAFAC class TrmE-Era-EngA-EngB-Septin-like GTPase superfamily. TrmE GTPase family. In terms of assembly, homodimer. Heterotetramer of two MnmE and two MnmG subunits. The cofactor is K(+).

It localises to the cytoplasm. In terms of biological role, exhibits a very high intrinsic GTPase hydrolysis rate. Involved in the addition of a carboxymethylaminomethyl (cmnm) group at the wobble position (U34) of certain tRNAs, forming tRNA-cmnm(5)s(2)U34. This is tRNA modification GTPase MnmE from Jannaschia sp. (strain CCS1).